Here is a 167-residue protein sequence, read N- to C-terminus: Putative ripening-related protein 6 (167 aa).

Residues 1 to 23 (MANAKQLALFAMLVLLLASCAAA) form the signal peptide. Residues 28–57 (KPDPCDGGGGGVDSHLPPGMRRCSSPAVSE) are disordered.

The protein belongs to the kiwellin family.

Its subcellular location is the secreted. The protein is Putative ripening-related protein 6 of Oryza sativa subsp. japonica (Rice).